A 142-amino-acid polypeptide reads, in one-letter code: Transcriptional regulator MraZ (142 aa).

2 consecutive SpoVT-AbrB domains span residues 5 to 46 and 75 to 118; these read THPV…DRSE and AAAQ…DSEA.

The protein belongs to the MraZ family. In terms of assembly, forms oligomers.

Its subcellular location is the cytoplasm. The protein localises to the nucleoid. This is Transcriptional regulator MraZ from Tropheryma whipplei (strain TW08/27) (Whipple's bacillus).